Consider the following 568-residue polypeptide: Natural resistance-associated macrophage protein 2 (568 aa).

A disordered region spans residues 1–40 (MVLGPEQKMSDDSVSGDHGESASLGNINPAYSNPSLSQSP). Topologically, residues 1-69 (MVLGPEQKMS…EEYSCFSFRK (69 aa)) are cytoplasmic. Over residues 8–20 (KMSDDSVSGDHGE) the composition is skewed to basic and acidic residues. Residues 23–40 (SLGNINPAYSNPSLSQSP) show a composition bias toward polar residues. Residues 70–90 (LWAFTGPGFLMSIAYLDPGNI) form a helical membrane-spanning segment. Residues 91–96 (ESDLQS) are Extracellular-facing. A helical transmembrane segment spans residues 97–117 (GAVAGFKLLWILLLATLVGLL). Topologically, residues 118-154 (LQRLAARLGVVTGLHLAEVCHRQYPKVPRVILWLMVE) are cytoplasmic. The helical transmembrane segment at 155–175 (LAIIGSDMQEVIGSAIAINLL) threads the bilayer. Topologically, residues 176–179 (SVGR) are extracellular. A helical membrane pass occupies residues 180-200 (IPLWGGVLITIADTFVFLFLD). At 201 to 208 (KYGLRKLE) the chain is on the cytoplasmic side. Residues 209-229 (AFFGFLITIMALTFGYEYVTV) form a helical membrane-spanning segment. The Extracellular portion of the chain corresponds to 230–255 (KPSQSQVLKGMFVPSCSGCRTPQIEQ). The helical transmembrane segment at 256–276 (AVGIVGAVIMPHNMYLHSALV) threads the bilayer. Topologically, residues 277–301 (KSRQVNRNNKQEVREANKYFFIESC) are cytoplasmic. A helical transmembrane segment spans residues 302–322 (IALFVSFIINVFVVSVFAEAF). The Extracellular segment spans residues 323-360 (FGKTNEQVVEVCTNTSSPHAGLFPKDNSTLAVDIYKGG). Asn336 and Asn349 each carry an N-linked (GlcNAc...) asparagine glycan. Residues 361 to 381 (VVLGCYFGPAALYIWAVGILA) form a helical membrane-spanning segment. Residues 382–408 (AGQSSTMTGTYSGQFVMEGFLNLKWSR) are Cytoplasmic-facing. Residues 409 to 429 (FARVVLTRSIAIIPTLLVAVF) traverse the membrane as a helical segment. Topologically, residues 430–440 (QDVEHLTGMND) are extracellular. Residues 441–461 (FLNVLQSLQLPFALIPILTFT) traverse the membrane as a helical segment. The Cytoplasmic segment spans residues 462 to 482 (SLRPVMSDFANGLGWRIAGGI). The chain crosses the membrane as a helical span at residues 483 to 503 (LVLIICSINMYFVVVYVRDLG). The Extracellular segment spans residues 504–506 (HVA). A helical membrane pass occupies residues 507 to 527 (LYVVAAVVSVAYLGFVFYLGW). Residues 528 to 568 (QCLIALGMSFLDCGHTCHLGLTAQPELYLLNTMDADSLVSR) lie on the Cytoplasmic side of the membrane. The required for early endosome targeting stretch occupies residues 555–559 (YLLNT). A phosphoserine mark is found at Ser564 and Ser567.

It belongs to the NRAMP family. In terms of assembly, forms a complex with NDFIP1 and NEDD4L, in cortical neurons, in response to iron and cobalt exposure; this interaction leads to SLC11A2 ubiquitination by NEDD4L and proteasome-dependent degradation. Interacts with NDFIP1, NDFIP2 and WWP2; this interaction leads to SLC11A2 ubiquitination by WWP2 and subsequent proteasome-dependent degradation. Interacts with COX2 and TOM6 at the outer mitochondrion membrane. Interacts with ARRDC1; this interaction regulates the incorporation of SLC11A2 into extracellular vesicles through an ubiquitination-dependent mechanism. Interacts with ARRDC4; controls the incorporation of SLC11A2 into extracellular vesicles through an ubiquitination-dependent mechanism. Ubiquitinated by WWP2. Post-translationally, N-glycosylated. In terms of tissue distribution, ubiquitously expressed. Expressed in erythroid progenitors.

It is found in the early endosome membrane. The protein resides in the apical cell membrane. It localises to the late endosome membrane. Its subcellular location is the lysosome membrane. The protein localises to the cell membrane. It is found in the extracellular vesicle membrane. The protein resides in the mitochondrion outer membrane. It localises to the golgi apparatus. Its subcellular location is the trans-Golgi network membrane. The protein localises to the recycling endosome membrane. It carries out the reaction Fe(2+)(in) + H(+)(in) = Fe(2+)(out) + H(+)(out). The enzyme catalyses Co(2+)(out) + H(+)(out) = Co(2+)(in) + H(+)(in). The catalysed reaction is Cd(2+)(out) + H(+)(out) = Cd(2+)(in) + H(+)(in). It catalyses the reaction Mn(2+)(in) + H(+)(in) = Mn(2+)(out) + H(+)(out). It carries out the reaction Zn(2+)(out) + H(+)(out) = Zn(2+)(in) + H(+)(in). The enzyme catalyses Ni(2+)(out) + H(+)(out) = Ni(2+)(in) + H(+)(in). The catalysed reaction is H(+)(in) = H(+)(out). It catalyses the reaction Fe(2+)(in) = Fe(2+)(out). Functionally, proton-coupled metal ion symporter operating with a proton to metal ion stoichiometry of 1:1. Selectively transports various divalent metal cations, in decreasing affinity: Cd(2+) &gt; Fe(2+) &gt; Co(2+), Mn(2+) &gt;&gt; Zn(2+), Ni(2+), VO(2+). Essential for maintenance of iron homeostasis by modulating intestinal absorption of dietary Fe(2+) and TF-associated endosomal Fe(2+) transport in erythroid precursors and other cells. Enables Fe(2+) and Mn(2+) ion entry into mitochondria, and is thus expected to promote mitochondrial heme synthesis, iron-sulfur cluster biogenesis and antioxidant defense. Can mediate uncoupled fluxes of either protons or metal ions. This Homo sapiens (Human) protein is Natural resistance-associated macrophage protein 2 (SLC11A2).